The following is a 424-amino-acid chain: MGFTGRRGKAEIIEAFSKHVSPYKAKFFSMVGIDFVPARREGVWYWDLDGRKLMDCHCNGGVFNLGHRHPEIVKTLVEALDELDIGNHHLISEQRARLAEKLAELMPGDISRTVFGVGGGEAIDFAIKLARGHTGRKKIIYAKGGYHGHTGFALAAGDEKYRKPFEPLAPGFVEVPFGDAEAVEKAVDDDTAAVLFETIPATLGMPLPPEDFYRRVREICDEKGCLMIMDEVQTGLGRTGKMWGIEHYKVVPDVIVTAKGLSGGVYPISATCFKEGLDDFMAENPFIHVSTFGGAELGCVVAEKVLEITSRESFLENVRKTGEALSEILGKLKDEYDFVDEIRQKGLFIGIKMVEEGWGPLLSISCYHSGILAVYANNDTSVMQFLPPLIVGEKEVDYIREKLAGAMEIASQRREMVEFIRKML.

Residue K259 is modified to N6-(pyridoxal phosphate)lysine.

The protein belongs to the class-III pyridoxal-phosphate-dependent aminotransferase family. Requires pyridoxal 5'-phosphate as cofactor.

This is an uncharacterized protein from Archaeoglobus fulgidus (strain ATCC 49558 / DSM 4304 / JCM 9628 / NBRC 100126 / VC-16).